Here is a 553-residue protein sequence, read N- to C-terminus: MIRFGNPSSSDKRRQRCRSWYWGGLLLLWAVAETRADIHYATVYWLEAEKSFQIKDVLDKNGDAYGYYNDAIQSTGWGILEIKAGYGNQPISNEILMYAAGFLEGYLTASHMSDHFANLFPLMIKNVIIEQKVKDFIQKQDEWTRQQIKNNKDDPFWRNAGYVIAQLDGLYMGNVEWAKRQKRTPLTDFEISFLNAIGDLLDLIPALHSELRKSDFRSMPDVSRIYQWDMGHCSALIKVLPGYENIYFAHSSWFTYAATLRIYKHLDFRITDPQTKTGRASFSSYPGLFGSLDDFYILGSGLIMLQTTNSVFNLSLLKKVVPESLFAWERVRIANMMADSGKTWAETFEKQNSGTYNNQYMILDTKKIKLQRSLEDGTLYIIEQVPKLVKYSDQTKVLRNGYWPSYNIPFDKEIYNMSGYGEYVQRHGLEFSYEMAPRAKIFRRDQGKVTDMESMKFIMRYNNYKEDPYAKHNPCNTICCRQDLDRRTPVPAGCYDSKVADISMAAKFTAYAINGPPVEKGLPVFSWVHFNKTKHQGLPESYNFDFVTMKPVL.

The N-terminal stretch at 1-35 (MIRFGNPSSSDKRRQRCRSWYWGGLLLLWAVAETR) is a signal peptide. Asn-313, Asn-416, and Asn-531 each carry an N-linked (GlcNAc...) asparagine glycan.

It belongs to the phospholipase B-like family. As to expression, expressed by the venom gland.

The protein resides in the secreted. Its function is as follows. May cause hemolysis or may be involved in protein folding and translation. The polypeptide is Phospholipase B (Crotalus adamanteus (Eastern diamondback rattlesnake)).